A 307-amino-acid chain; its full sequence is Dihydroorotate dehydrogenase B (NAD(+)), catalytic subunit (307 aa).

FMN is bound by residues Ser-22 and 46–47; that span reads KG. Residues Lys-46 and 70–74 contribute to the substrate site; that span reads NAVGL. 2 residues coordinate FMN: Asn-100 and Asn-128. A substrate-binding site is contributed by Asn-128. The Nucleophile role is filled by Cys-131. FMN-binding residues include Lys-166 and Val-192. 193–194 serves as a coordination point for substrate; it reads NT. FMN-binding positions include Gly-218 and 244-245; that span reads GG.

The protein belongs to the dihydroorotate dehydrogenase family. Type 1 subfamily. In terms of assembly, heterotetramer of 2 PyrK and 2 PyrD type B subunits. FMN serves as cofactor.

The protein resides in the cytoplasm. It carries out the reaction (S)-dihydroorotate + NAD(+) = orotate + NADH + H(+). The protein operates within pyrimidine metabolism; UMP biosynthesis via de novo pathway; orotate from (S)-dihydroorotate (NAD(+) route): step 1/1. Its function is as follows. Catalyzes the conversion of dihydroorotate to orotate with NAD(+) as electron acceptor. The chain is Dihydroorotate dehydrogenase B (NAD(+)), catalytic subunit (pyrD) from Porphyromonas gingivalis (strain ATCC BAA-308 / W83).